A 177-amino-acid chain; its full sequence is Parathyroid hormone-related protein (177 aa).

Positions 1 to 24 are cleaved as a signal peptide; sequence MLRRLVQQWSVAVFLLSYSVPSCG. Residues 25-34 constitute a propeptide that is removed on maturation; it reads RSVEGPGRRL. Positions 57-68 are important for receptor binding; it reads RFFLHHLIAEIH. Residues 74–177 form a disordered region; the sequence is ATSEVSPNSK…PEPELDSRRH (104 aa). Residues 76 to 90 are compositionally biased toward polar residues; the sequence is SEVSPNSKPAANTKN. Positions 108-129 match the Nuclear localization signal motif; that stretch reads TNKVEPYKEQPLKTPGKKKKGK. Residues 109-118 are compositionally biased toward basic and acidic residues; the sequence is NKVEPYKEQP. The segment covering 122–132 has biased composition (basic residues); it reads PGKKKKGKPGK.

This sequence belongs to the parathyroid hormone family. In terms of assembly, PTHrP interacts with PTH1R (via N-terminal extracellular domain). Post-translationally, there are several secretory forms, including osteostatin, arising from endoproteolytic cleavage of the initial translation product. Each of these secretory forms is believed to have one or more of its own receptors that mediates the normal paracrine, autocrine and endocrine actions.

Its subcellular location is the secreted. The protein resides in the cytoplasm. The protein localises to the nucleus. Its function is as follows. Neuroendocrine peptide which is a critical regulator of cellular and organ growth, development, migration, differentiation and survival and of epithelial calcium ion transport. Acts by binding to its receptor, PTH1R, activating G protein-coupled receptor signaling. Regulates endochondral bone development and epithelial-mesenchymal interactions during the formation of the mammary glands and teeth. Required for skeletal homeostasis. Promotes mammary mesenchyme differentiation and bud outgrowth by modulating mesenchymal cell responsiveness to BMPs. Up-regulates BMPR1A expression in the mammary mesenchyme and this increases the sensitivity of these cells to BMPs and allows them to respond to BMP4 in a paracrine and/or autocrine fashion. BMP4 signaling in the mesenchyme, in turn, triggers epithelial outgrowth and augments MSX2 expression, which causes the mammary mesenchyme to inhibit hair follicle formation within the nipple sheath. In terms of biological role, potent inhibitor of osteoclastic bone resorption. In Oryctolagus cuniculus (Rabbit), this protein is Parathyroid hormone-related protein (PTHLH).